The following is a 381-amino-acid chain: 3-dehydroquinate synthase (381 aa).

Residues 81 to 86 (EGESSK), 115 to 119 (GVIGD), 139 to 140 (TS), lysine 152, and lysine 161 each bind NAD(+). Residues glutamate 194, histidine 256, and histidine 274 each coordinate Zn(2+).

The protein belongs to the sugar phosphate cyclases superfamily. Dehydroquinate synthase family. It depends on Co(2+) as a cofactor. Zn(2+) is required as a cofactor. NAD(+) serves as cofactor.

The protein resides in the cytoplasm. It catalyses the reaction 7-phospho-2-dehydro-3-deoxy-D-arabino-heptonate = 3-dehydroquinate + phosphate. Its pathway is metabolic intermediate biosynthesis; chorismate biosynthesis; chorismate from D-erythrose 4-phosphate and phosphoenolpyruvate: step 2/7. Functionally, catalyzes the conversion of 3-deoxy-D-arabino-heptulosonate 7-phosphate (DAHP) to dehydroquinate (DHQ). This chain is 3-dehydroquinate synthase, found in Rhodopseudomonas palustris (strain ATCC BAA-98 / CGA009).